We begin with the raw amino-acid sequence, 123 residues long: Small ribosomal subunit protein uS12cz/uS12cy (123 aa).

It belongs to the universal ribosomal protein uS12 family. Part of the 30S ribosomal subunit.

The protein localises to the plastid. Its subcellular location is the chloroplast. Its function is as follows. With S4 and S5 plays an important role in translational accuracy. Located at the interface of the 30S and 50S subunits. This is Small ribosomal subunit protein uS12cz/uS12cy (rps12-A) from Glycine max (Soybean).